Reading from the N-terminus, the 125-residue chain is Protein ApaG (125 aa).

In terms of domain architecture, ApaG spans 1–125 (MINSPRVCVQ…FRLAIPSLIN (125 aa)).

The protein is Protein ApaG of Sodalis glossinidius (strain morsitans).